Here is a 187-residue protein sequence, read N- to C-terminus: Peptide deformylase 1 (187 aa).

Fe cation-binding residues include C107 and H149. E150 is an active-site residue. H153 lines the Fe cation pocket.

It belongs to the polypeptide deformylase family. Fe(2+) is required as a cofactor.

It catalyses the reaction N-terminal N-formyl-L-methionyl-[peptide] + H2O = N-terminal L-methionyl-[peptide] + formate. Removes the formyl group from the N-terminal Met of newly synthesized proteins. Requires at least a dipeptide for an efficient rate of reaction. N-terminal L-methionine is a prerequisite for activity but the enzyme has broad specificity at other positions. The polypeptide is Peptide deformylase 1 (Nostoc sp. (strain PCC 7120 / SAG 25.82 / UTEX 2576)).